A 91-amino-acid polypeptide reads, in one-letter code: Acylphosphatase (91 aa).

Positions 3-89 (AKHLILSGRV…PAEPGFVKRA (87 aa)) constitute an Acylphosphatase-like domain. Active-site residues include arginine 18 and asparagine 36.

The protein belongs to the acylphosphatase family.

It carries out the reaction an acyl phosphate + H2O = a carboxylate + phosphate + H(+). This Acidiphilium cryptum (strain JF-5) protein is Acylphosphatase (acyP).